A 498-amino-acid polypeptide reads, in one-letter code: Trichoplein keratin filament-binding protein (498 aa).

Residues 11–39 (CSQQRLNQQLARQREQEARLRQQWEQNSR) are a coiled coil. Glycyl lysine isopeptide (Lys-Gly) (interchain with G-Cter in ubiquitin) cross-links involve residues lysine 50 and lysine 57. 3 coiled-coil regions span residues 66 to 136 (AYQR…LIAE), 163 to 353 (VNSW…LREE), and 380 to 479 (LTGR…EAET). An interaction with keratin proteins region spans residues 73 to 498 (KEEKRRSLEA…PYGHPKIAWN (426 aa)). The disordered stretch occupies residues 167–189 (EMQKEEKKQQEATAEQENKRYEN). Positions 168–189 (MQKEEKKQQEATAEQENKRYEN) are enriched in basic and acidic residues. Positions 259–425 (KQMEAFRQKA…RELARREKEE (167 aa)) are trichohyalin/plectin homology domain. Positions 447 to 498 (QAWEADQQEEEEEEEARRVEQLSDALLQQEAETMAEQGYRPKPYGHPKIAWN) are disordered.

It belongs to the TCHP family. In terms of assembly, interacts specifically with keratin proteins including, KRT5, KRT6A, KRT8, KRT14, KRT16 and KRT18. Interacts with KCTD17. Ubiquitinated. Ubiquitination by the BCR(KCTD17) E3 ubiquitin ligase complex results in proteasomal degradation, and induces ciliogenesis. Expressed at high levels in normal urothelial and breast epithelial cells. Also expressed in the smooth muscle and endothelial cells. Reduced expression seen in advanced bladder and breast carcinomas (at protein level). Ubiquitous. Expressed at highest levels in the heart, skeletal muscle, kidney, liver and testis.

The protein resides in the cytoplasm. Its subcellular location is the cytoskeleton. It localises to the cell membrane. The protein localises to the mitochondrion. It is found in the cell junction. The protein resides in the desmosome. Its subcellular location is the microtubule organizing center. It localises to the centrosome. Its function is as follows. Tumor suppressor which has the ability to inhibit cell growth and be pro-apoptotic during cell stress. Inhibits cell growth in bladder and prostate cancer cells by a down-regulation of HSPB1 by inhibiting its phosphorylation. May act as a 'capping' or 'branching' protein for keratin filaments in the cell periphery. May regulate K8/K18 filament and desmosome organization mainly at the apical or peripheral regions of simple epithelial cells. Is a negative regulator of ciliogenesis. The polypeptide is Trichoplein keratin filament-binding protein (Homo sapiens (Human)).